The following is a 420-amino-acid chain: Serine--tRNA ligase (420 aa).

229–231 serves as a coordination point for L-serine; sequence TAE. Position 260–262 (260–262) interacts with ATP; it reads RSE. An L-serine-binding site is contributed by glutamate 283. 347–350 is an ATP binding site; it reads EISS. Serine 381 contacts L-serine.

This sequence belongs to the class-II aminoacyl-tRNA synthetase family. Type-1 seryl-tRNA synthetase subfamily. As to quaternary structure, homodimer. The tRNA molecule binds across the dimer.

Its subcellular location is the cytoplasm. The catalysed reaction is tRNA(Ser) + L-serine + ATP = L-seryl-tRNA(Ser) + AMP + diphosphate + H(+). It carries out the reaction tRNA(Sec) + L-serine + ATP = L-seryl-tRNA(Sec) + AMP + diphosphate + H(+). The protein operates within aminoacyl-tRNA biosynthesis; selenocysteinyl-tRNA(Sec) biosynthesis; L-seryl-tRNA(Sec) from L-serine and tRNA(Sec): step 1/1. In terms of biological role, catalyzes the attachment of serine to tRNA(Ser). Is also able to aminoacylate tRNA(Sec) with serine, to form the misacylated tRNA L-seryl-tRNA(Sec), which will be further converted into selenocysteinyl-tRNA(Sec). The polypeptide is Serine--tRNA ligase (Gluconobacter oxydans (strain 621H) (Gluconobacter suboxydans)).